Here is a 221-residue protein sequence, read N- to C-terminus: Ribonuclease HII (221 aa).

Positions 29-220 (RRVAGVDEVG…LRDLQAGEIG (192 aa)) constitute an RNase H type-2 domain. Positions 35, 36, and 129 each coordinate a divalent metal cation. Positions 198-221 (LGPSPQHRRSFAPLRDLQAGEIGG) are disordered.

It belongs to the RNase HII family. Requires Mn(2+) as cofactor. The cofactor is Mg(2+).

It is found in the cytoplasm. The catalysed reaction is Endonucleolytic cleavage to 5'-phosphomonoester.. Endonuclease that specifically degrades the RNA of RNA-DNA hybrids. The polypeptide is Ribonuclease HII (Synechococcus sp. (strain JA-3-3Ab) (Cyanobacteria bacterium Yellowstone A-Prime)).